The primary structure comprises 562 residues: Valerena-4,7(11)-diene synthase (562 aa).

The Mg(2+) site is built by Asp-314, Asp-318, and Glu-467. The short motif at 314 to 318 (DDTYD) is the DDXXD motif element.

It belongs to the terpene synthase family. Requires Mg(2+) as cofactor. As to expression, predominantly expressed in root.

The enzyme catalyses (2E,6E)-farnesyl diphosphate = valerena-4,7(11)-diene + diphosphate. Functionally, catalyzes formation of valerena-4,7(11)-diene, one of the active ingredients responsible for the sedative effect extracted from Valeriana officinalis root. This chain is Valerena-4,7(11)-diene synthase (TPS2), found in Valeriana officinalis (Valerian).